Here is a 445-residue protein sequence, read N- to C-terminus: Xylose isomerase (445 aa).

Residues His-107 and Asp-110 contribute to the active site. Mg(2+)-binding residues include Glu-238, Glu-274, His-277, Asp-302, Asp-313, Asp-315, and Asp-345.

Belongs to the xylose isomerase family. As to quaternary structure, homotetramer. Requires Mg(2+) as cofactor.

It localises to the cytoplasm. The enzyme catalyses alpha-D-xylose = alpha-D-xylulofuranose. This Bacillus pumilus (strain SAFR-032) protein is Xylose isomerase.